We begin with the raw amino-acid sequence, 527 residues long: Zinc finger imprinted 2 (527 aa).

Over residues 1–16 (MYQPEDDNNSDVTSDD) the composition is skewed to acidic residues. Residues 1 to 104 (MYQPEDDNNS…SRSQDAESYQ (104 aa)) form a disordered region. 3 stretches are compositionally biased toward basic and acidic residues: residues 17–26 (DMTRNRRESS), 35–56 (SGDR…DRWS), and 80–99 (FEMD…RSQD). The 71-residue stretch at 176 to 246 (VTFEDVLVDF…ETDSRHTVIC (71 aa)) folds into the KRAB domain. Residues 247–322 (QGESHDDPLE…GICTSPQSAS (76 aa)) form a disordered region. Over residues 259-275 (QGNQEKLLTPITMNDPK) the composition is skewed to polar residues. Residues 297 to 307 (QSKDPLGKDPQ) are compositionally biased toward basic and acidic residues. 5 C2H2-type zinc fingers span residues 328-350 (NRCE…ERIH), 356-378 (YECK…QKTH), 412-434 (FECF…LKAH), 466-488 (CQCC…YRTH), and 494-516 (YQCQ…YQLH).

The protein belongs to the krueppel C2H2-type zinc-finger protein family. Highest levels of expression in adult testis; modest levels in fetal kidney and brain.

It localises to the nucleus. Its function is as follows. May be involved in transcriptional regulation. The sequence is that of Zinc finger imprinted 2 (ZIM2) from Homo sapiens (Human).